The following is a 1059-amino-acid chain: Microtubule-associated protein 1S (1059 aa).

Positions 1–797 (MAAVAGSGAA…SESLPTLSDS (797 aa)) are necessary for the microtubule-organizing center localization. Phosphoserine is present on residues Ser321 and Ser472. Disordered stretches follow at residues 461-733 (PQDL…ASPH) and 751-942 (VPMA…SATP). Basic and acidic residues-rich tracts occupy residues 466–486 (GPGR…KREG) and 494–530 (PGQE…KDPK). Residues 547 to 557 (SVPNLKKTNAQ) show a composition bias toward polar residues. Phosphoserine is present on Ser582. Residues 591–603 (ASPPSAACGSPAS) are compositionally biased toward low complexity. Thr638 carries the phosphothreonine modification. Ser640 is subject to Phosphoserine. The span at 642-652 (ESHRSPAEGSE) shows a compositional bias: basic and acidic residues. Phosphoserine occurs at positions 655 and 657. Positions 666-1059 (PDASPTVTTP…DAFPACKVEF (394 aa)) are necessary for interaction with RASSF1 isoform A and isoform C. The segment covering 670–680 (PTVTTPTVTTP) has biased composition (low complexity). The interval 714–966 (EAGLSLPLRG…GSSAHLVDEE (253 aa)) is necessary for association with microtubules. 2 positions are modified to phosphoserine: Ser731 and Ser759. Over residues 759 to 769 (SPGSSNDSSAR) the composition is skewed to low complexity. The segment covering 783–796 (PPTSVSESLPTLSD) has biased composition (polar residues). Ser809 carries the phosphoserine modification. The segment covering 825 to 836 (PDPLKVPPPLPD) has biased composition (pro residues). Low complexity-rich tracts occupy residues 873-887 (AAAP…AKTK) and 923-936 (TATR…SSRP). The interval 960–1059 (AHLVDEEFFQ…DAFPACKVEF (100 aa)) is necessary for association with actin. Residues 967–991 (FFQRVRALCYVISGQDQRKEEGMRA) are necessary for the mitochondrial aggregation and genome destruction.

The protein belongs to the MAP1 family. As to quaternary structure, heterodimer of a heavy and a light chain. Interacts with microtubules and actin. Both MAP1S heavy and light chains interact with microtubules. MAP1S light chain interacts with actin. Interacts (via C-terminus) with GAN (via Kelch domains). Interacts with ESR1, LRPPRC, RASSF1 isoform A and isoform C, microtubules and VCY2. Interacts with WDR47 (via N-terminus of light chain). In terms of tissue distribution, expressed in neurons (at protein level). Expressed in spermatocytes, spermatids and spermatozoa. Expressed in the cerebral cortex. Highly expressed in testis. Moderately expressed in the brain, colon, heart, kidney, liver, lung, placenta, small intestine, spleen and stomach. Weakly expressed in muscle.

The protein resides in the nucleus. Its subcellular location is the cytoplasm. It is found in the cytosol. It localises to the cytoskeleton. The protein localises to the spindle. Microtubule-associated protein that mediates aggregation of mitochondria resulting in cell death and genomic destruction (MAGD). Plays a role in anchoring the microtubule organizing center to the centrosomes. Binds to DNA. Plays a role in apoptosis. Involved in the formation of microtubule bundles. The protein is Microtubule-associated protein 1S (MAP1S) of Homo sapiens (Human).